The chain runs to 514 residues: Exoglucanase 1 (514 aa).

A signal peptide spans 1–17; sequence MYQKLALISAFLATARA. Residues 18 to 453 form a catalytic region; that stretch reads QSACTLQAET…GSTGNSSGGN (436 aa). 10 cysteine pairs are disulfide-bonded: Cys21-Cys89, Cys36-Cys42, Cys67-Cys88, Cys78-Cys84, Cys155-Cys414, Cys189-Cys227, Cys193-Cys226, Cys247-Cys273, Cys255-Cys260, and Cys278-Cys348. N-linked (GlcNAc...) asparagine glycosylation is found at Asn62 and Asn81. The Nucleophile role is filled by Glu229. Glu234 functions as the Proton donor in the catalytic mechanism. An N-linked (GlcNAc...) asparagine glycan is attached at Asn287. 2 disordered regions span residues 401-427 and 444-481; these read NETSSTPGAVRGSCSTSSGVPAQLESN and GSTGNSSGGNPPGGNPPGTTTTRRPATSTGSSPGPTQT. The interval 454–478 is linker; the sequence is PPGGNPPGTTTTRRPATSTGSSPGP. Residues 460-479 show a composition bias toward low complexity; sequence PGTTTTRRPATSTGSSPGPT. In terms of domain architecture, CBM1 spans 478–514; sequence PTQTHYGQCGGIGYSGPTVCASGSTCQVLNPYYSQCL. Cystine bridges form between Cys486/Cys503 and Cys497/Cys513.

Belongs to the glycosyl hydrolase 7 (cellulase C) family.

It catalyses the reaction Hydrolysis of (1-&gt;4)-beta-D-glucosidic linkages in cellulose and cellotetraose, releasing cellobiose from the non-reducing ends of the chains.. In terms of biological role, the biological conversion of cellulose to glucose generally requires three types of hydrolytic enzymes: (1) Endoglucanases which cut internal beta-1,4-glucosidic bonds; (2) Exocellobiohydrolases that cut the disaccharide cellobiose from the non-reducing end of the cellulose polymer chain; (3) Beta-1,4-glucosidases which hydrolyze the cellobiose and other short cello-oligosaccharides to glucose. The protein is Exoglucanase 1 (cbh1) of Hypocrea rufa (Trichoderma viride).